The primary structure comprises 546 residues: Probable E3 ubiquitin-protein ligase NGR_a03640 (546 aa).

Residues methionine 1–alanine 70 are disordered. Residues methionine 1–methionine 248 are interaction with target proteins. Over residues serine 22–serine 48 the composition is skewed to low complexity. The span at alanine 58 to proline 67 shows a compositional bias: basic and acidic residues. 5 LRR repeats span residues glycine 104–threonine 125, leucine 126–alanine 144, glycine 145–alanine 166, leucine 167–proline 186, and glutamate 187–glutamine 208. Residues glycine 249–arginine 256 are linker. An NEL domain is found at proline 257–leucine 546. An E3 ubiquitin-protein ligase catalytic domain region spans residues proline 257–leucine 546. Cysteine 338 acts as the Glycyl thioester intermediate in catalysis.

It belongs to the LRR-containing bacterial E3 ligase family. In terms of processing, ubiquitinated in the presence of host E1 ubiquitin-activating enzyme, E2 ubiquitin-conjugating enzyme and ubiquitin.

The protein resides in the secreted. The protein localises to the host cytoplasm. Effector proteins function to alter host cell physiology and promote bacterial survival in host tissues. This protein is an E3 ubiquitin ligase that interferes with host's ubiquitination pathway. The protein is Probable E3 ubiquitin-protein ligase NGR_a03640 of Sinorhizobium fredii (strain NBRC 101917 / NGR234).